Consider the following 393-residue polypeptide: Messenger RNA-binding inhibitor of apoptosis 1 (393 aa).

The tract at residues Glu12–Lys76 is KH 1-like. Residues Val79–Phe157 are KH 2-like. The segment at Glu259 to Asn322 is KH 3-like. Positions Met328–Asp393 are disordered. Low complexity predominate over residues Ser345 to Thr359.

May interact with wago-4. In terms of tissue distribution, expressed throughout the germline and in oocytes (at protein level).

It localises to the cytoplasm. It is found in the perinuclear region. In terms of biological role, RNA-binding protein which binds to its own mRNA and target mRNAs to negatively regulate gene expression to modulate apoptosis and differentiation in the germline. Negatively regulates the expression of the argonaute protein wago-4, and may thus play a role in RNA-mediated gene silencing (RNAi) in the germline. The polypeptide is Messenger RNA-binding inhibitor of apoptosis 1 (Caenorhabditis elegans).